The following is a 79-amino-acid chain: Small ribosomal subunit protein bS18 (79 aa).

The protein belongs to the bacterial ribosomal protein bS18 family. In terms of assembly, part of the 30S ribosomal subunit. Forms a tight heterodimer with protein bS6.

Its function is as follows. Binds as a heterodimer with protein bS6 to the central domain of the 16S rRNA, where it helps stabilize the platform of the 30S subunit. This Rhodopseudomonas palustris (strain HaA2) protein is Small ribosomal subunit protein bS18.